A 243-amino-acid polypeptide reads, in one-letter code: Carboxy-S-adenosyl-L-methionine synthase (243 aa).

Residues Y40, G65–S67, D90–N91, D118–I119, N133, and R200 contribute to the S-adenosyl-L-methionine site.

It belongs to the class I-like SAM-binding methyltransferase superfamily. Cx-SAM synthase family. In terms of assembly, homodimer.

It catalyses the reaction prephenate + S-adenosyl-L-methionine = carboxy-S-adenosyl-L-methionine + 3-phenylpyruvate + H2O. In terms of biological role, catalyzes the conversion of S-adenosyl-L-methionine (SAM) to carboxy-S-adenosyl-L-methionine (Cx-SAM). The sequence is that of Carboxy-S-adenosyl-L-methionine synthase from Shewanella putrefaciens (strain CN-32 / ATCC BAA-453).